Reading from the N-terminus, the 72-residue chain is Translation initiation factor IF-1 (72 aa).

The S1-like domain maps to 1–72 (MSKEEVLEFS…TKGRITYRYK (72 aa)).

The protein belongs to the IF-1 family. In terms of assembly, component of the 30S ribosomal translation pre-initiation complex which assembles on the 30S ribosome in the order IF-2 and IF-3, IF-1 and N-formylmethionyl-tRNA(fMet); mRNA recruitment can occur at any time during PIC assembly.

Its subcellular location is the cytoplasm. In terms of biological role, one of the essential components for the initiation of protein synthesis. Stabilizes the binding of IF-2 and IF-3 on the 30S subunit to which N-formylmethionyl-tRNA(fMet) subsequently binds. Helps modulate mRNA selection, yielding the 30S pre-initiation complex (PIC). Upon addition of the 50S ribosomal subunit IF-1, IF-2 and IF-3 are released leaving the mature 70S translation initiation complex. The protein is Translation initiation factor IF-1 of Bartonella bacilliformis (strain ATCC 35685 / KC583 / Herrer 020/F12,63).